The following is a 174-amino-acid chain: Probable nicotinate-nucleotide adenylyltransferase (174 aa).

The protein belongs to the NadD family.

It catalyses the reaction nicotinate beta-D-ribonucleotide + ATP + H(+) = deamido-NAD(+) + diphosphate. Its pathway is cofactor biosynthesis; NAD(+) biosynthesis; deamido-NAD(+) from nicotinate D-ribonucleotide: step 1/1. Functionally, catalyzes the reversible adenylation of nicotinate mononucleotide (NaMN) to nicotinic acid adenine dinucleotide (NaAD). The chain is Probable nicotinate-nucleotide adenylyltransferase from Helicobacter pylori (strain HPAG1).